Consider the following 292-residue polypeptide: Bifunctional protein FolD 2 (292 aa).

NADP(+) is bound by residues 166–168 and I232; that span reads GHS.

The protein belongs to the tetrahydrofolate dehydrogenase/cyclohydrolase family. In terms of assembly, homodimer.

The enzyme catalyses (6R)-5,10-methylene-5,6,7,8-tetrahydrofolate + NADP(+) = (6R)-5,10-methenyltetrahydrofolate + NADPH. It catalyses the reaction (6R)-5,10-methenyltetrahydrofolate + H2O = (6R)-10-formyltetrahydrofolate + H(+). Its pathway is one-carbon metabolism; tetrahydrofolate interconversion. Catalyzes the oxidation of 5,10-methylenetetrahydrofolate to 5,10-methenyltetrahydrofolate and then the hydrolysis of 5,10-methenyltetrahydrofolate to 10-formyltetrahydrofolate. The sequence is that of Bifunctional protein FolD 2 from Ruegeria pomeroyi (strain ATCC 700808 / DSM 15171 / DSS-3) (Silicibacter pomeroyi).